A 391-amino-acid polypeptide reads, in one-letter code: Oxytocin receptor (391 aa).

The Extracellular portion of the chain corresponds to 1-38 (MEGAFAANWSAEAVNGSAAPPGTEGNRTAGPPQRNEAL). 3 N-linked (GlcNAc...) asparagine glycosylation sites follow: Asn8, Asn15, and Asn26. A helical membrane pass occupies residues 39 to 63 (ARVEVAVLCLILFLALSGNACVLLA). Residues 64 to 74 (LRTTRHKHSRL) are Cytoplasmic-facing. A helical transmembrane segment spans residues 75–97 (FFFMKHLSIADLVVAVFQVLPQL). Topologically, residues 98–113 (LWDITFRFYGPDLLCR) are extracellular. Cys112 and Cys187 are oxidised to a cystine. The helical transmembrane segment at 114-135 (LVKYLQVVGMFASTYLLLLMSL) threads the bilayer. Residues 136–154 (DRCLAICQPLRSLSRRTDR) are Cytoplasmic-facing. The helical transmembrane segment at 155–175 (LAVLVTWLGCLVASAPQVHIF) threads the bilayer. Residues 176–202 (SLREVADGVFDCWAVFIQPWGPKAYIT) lie on the Extracellular side of the membrane. A helical transmembrane segment spans residues 203-225 (WITLAVYIVPVIVLATCYGLISF). Topologically, residues 226–277 (KIWQNLRLKTAAAAAEAAAGAEGEAADWAGRAILARVSNVKLISKAKIRTVK) are cytoplasmic. Residues 278–296 (MTFIVVLAFIVCWTPFFFV) traverse the membrane as a helical segment. The Extracellular segment spans residues 297-311 (QMWSVWDADAPKEAS). The chain crosses the membrane as a helical span at residues 312–334 (PFIIAMLLASLNSCCNPWIYMLF). Residues 335–391 (TGHLFQELVQRFLCCSFRRLKGSRPGETSVSKKSNSSTFVLSQYSSSQRRCSQPSTL) are Cytoplasmic-facing. Phosphoserine occurs at positions 368 and 370.

Belongs to the G-protein coupled receptor 1 family. Vasopressin/oxytocin receptor subfamily.

It is found in the cell membrane. Functionally, receptor for oxytocin. The activity of this receptor is mediated by G proteins which activate a phosphatidylinositol-calcium second messenger system. The protein is Oxytocin receptor (OXTR) of Bos taurus (Bovine).